We begin with the raw amino-acid sequence, 316 residues long: Probable cobalamin biosynthesis protein CobD (316 aa).

The next 5 helical transmembrane spans lie at M1–L21, I50–L70, I89–I109, P165–F185, and I294–L314.

It belongs to the CobD/CbiB family.

The protein localises to the cell membrane. Its pathway is cofactor biosynthesis; adenosylcobalamin biosynthesis. In terms of biological role, converts cobyric acid to cobinamide by the addition of aminopropanol on the F carboxylic group. The chain is Probable cobalamin biosynthesis protein CobD from Methanothrix thermoacetophila (strain DSM 6194 / JCM 14653 / NBRC 101360 / PT) (Methanosaeta thermophila).